Reading from the N-terminus, the 838-residue chain is Leucine--tRNA ligase (838 aa).

The 'HIGH' region signature appears at 38-48; the sequence is PYPSGKAHVGH. The short motif at 608 to 612 is the 'KMSKS' region element; that stretch reads KMSKS. Residue lysine 611 participates in ATP binding.

The protein belongs to the class-I aminoacyl-tRNA synthetase family.

The protein resides in the cytoplasm. It catalyses the reaction tRNA(Leu) + L-leucine + ATP = L-leucyl-tRNA(Leu) + AMP + diphosphate. The polypeptide is Leucine--tRNA ligase (Orientia tsutsugamushi (strain Boryong) (Rickettsia tsutsugamushi)).